We begin with the raw amino-acid sequence, 150 residues long: Arginine repressor (150 aa).

It belongs to the ArgR family.

Its subcellular location is the cytoplasm. The protein operates within amino-acid biosynthesis; L-arginine biosynthesis [regulation]. Its function is as follows. Regulates arginine biosynthesis genes. This is Arginine repressor from Clostridium botulinum (strain ATCC 19397 / Type A).